Consider the following 124-residue polypeptide: MPFLYMLFLTVTVKLLNSTENFLFHKFFFSFFTLLSSPYVYPFFFSLLVLTIPYHTILSYPVLYNTIPYHTIPYLTMPCLALHFRLQPTLLLQWCPLRQCALPFQSHLLFTPRFLLPQITGIFE.

This is an uncharacterized protein from Schizosaccharomyces pombe (strain 972 / ATCC 24843) (Fission yeast).